Here is a 427-residue protein sequence, read N- to C-terminus: Vitamin D3 receptor (427 aa).

Residues 21-96 constitute a DNA-binding region (nuclear receptor); the sequence is PRICGVCGDR…IGMMKEFILT (76 aa). Zn(2+)-binding residues include C24, C27, C41, C44, C60, C66, C76, and C79. 2 consecutive NR C4-type zinc fingers follow at residues 24 to 44 and 60 to 79; these read CGVC…CEGC and CPFN…CQAC. Residues 97–126 form a hinge region; sequence DEEVQRKREMILKRKEEEALKDSLRPKLSE. The NR LBD domain occupies 127–423; that stretch reads EQQRIIAILL…LTPLVLEVFG (297 aa). Calcitriol is bound at residue Y143. The tract at residues 149 to 201 is disordered; that stretch reads DFGQFRPPVRGDEEEGTLPSRSSSAHAPSFSGSSSSSCSDQYTSSPDTMEPAS. A compositionally biased stretch (low complexity) spans 168–193; that stretch reads SRSSSAHAPSFSGSSSSSCSDQYTSS. S237 contributes to the calcitriol binding site. An interaction with coactivator LXXLL motif region spans residues 246–264; that stretch reads KMIPGFRDLTAEDQIVLLK. Calcitriol is bound by residues R274, S278, H305, and H397. The 9aaTAD motif lies at 416–424; sequence PLVLEVFGN.

This sequence belongs to the nuclear hormone receptor family. NR1 subfamily. As to quaternary structure, homodimer in the absence of bound vitamin D3. Heterodimer with RXRA after vitamin D3 binding. Interacts with MED1, NCOA1, NCOA2, NCOA3 and NCOA6 coactivators, leading to a strong increase of transcription of target genes. Interacts with the corepressor NCOR1. Interacts with SNW1. Interacts with IRX4, the interaction does not affect its transactivation activity. Interacts with CRY1. Interacts with CRY2 in a ligand-dependent manner. Post-translationally, ubiquitinated by UBR5, leading to its degradation: UBR5 specifically recognizes and binds ligand-bound VDR when it is not associated with coactivators (NCOAs). In presence of NCOAs, the UBR5-degron is not accessible, preventing its ubiquitination and degradation.

The protein localises to the nucleus. It is found in the cytoplasm. Its function is as follows. Nuclear receptor for calcitriol, the active form of vitamin D3 which mediates the action of this vitamin on cells. Enters the nucleus upon vitamin D3 binding where it forms heterodimers with the retinoid X receptor/RXR. The VDR-RXR heterodimers bind to specific response elements on DNA and activate the transcription of vitamin D3-responsive target genes. Plays a central role in calcium homeostasis. Also functions as a receptor for the secondary bile acid lithocholic acid (LCA) and its metabolites. The chain is Vitamin D3 receptor (VDR) from Sus scrofa (Pig).